Reading from the N-terminus, the 210-residue chain is Signal peptidase complex catalytic subunit SEC11 (210 aa).

Over 1 to 21 (MLAGLSPHLSNLRRSLTQVLN) the chain is Cytoplasmic. A helical; Signal-anchor for type II membrane protein membrane pass occupies residues 22-38 (FALVLSTAFMMWKGLSI). Residues 39 to 210 (YTNSSSPIVV…MGAMVILQRE (172 aa)) lie on the Lumenal side of the membrane. N-linked (GlcNAc...) asparagine glycosylation is present at asparagine 41. Residues serine 53, histidine 92, and aspartate 152 each act as charge relay system in the active site. The segment at 196 to 207 (VLLGIMGAMVIL) is C-terminal short (CTS) helix.

This sequence belongs to the peptidase S26B family. Component of the signal peptidase complex (SPC) composed of a catalytic subunit SEC11 and three accessory subunits SPC1, SPC2 and SPC3. The complex induces a local thinning of the ER membrane which is used to measure the length of the signal peptide (SP) h-region of protein substrates. This ensures the selectivity of the complex towards h-regions shorter than 18-20 amino acids. SPC associates with the translocon complex.

Its subcellular location is the endoplasmic reticulum membrane. The enzyme catalyses Cleavage of hydrophobic, N-terminal signal or leader sequences from secreted and periplasmic proteins.. Catalytic component of the signal peptidase complex (SPC) which catalyzes the cleavage of N-terminal signal sequences from nascent proteins as they are translocated into the lumen of the endoplasmic reticulum. Specifically cleaves N-terminal signal peptides that contain a hydrophobic alpha-helix (h-region) shorter than 18-20 amino acids. The chain is Signal peptidase complex catalytic subunit SEC11 (SEC11) from Coccidioides posadasii (strain RMSCC 757 / Silveira) (Valley fever fungus).